A 147-amino-acid polypeptide reads, in one-letter code: Hemoglobin subunit gamma (147 aa).

Positions 3–147 (HFTAEEKAAI…VANALAYKYH (145 aa)) constitute a Globin domain. Residues histidine 64 and histidine 93 each contribute to the heme b site.

The protein belongs to the globin family. Heterotetramer of two alpha chains and two gamma chains in fetal hemoglobin (Hb F). In terms of tissue distribution, red blood cells.

In terms of biological role, gamma chains make up the fetal hemoglobin F, in combination with alpha chains. This chain is Hemoglobin subunit gamma (HBG), found in Elephas maximus (Indian elephant).